Consider the following 718-residue polypeptide: Catalase-peroxidase (718 aa).

Residues 98–219 (WHAAGTYRMG…LAATEMGLIY (122 aa)) constitute a cross-link (tryptophyl-tyrosyl-methioninium (Trp-Tyr) (with M-245)). Residue His-99 is the Proton acceptor of the active site. The tryptophyl-tyrosyl-methioninium (Tyr-Met) (with W-98) cross-link spans 219–245 (YVNPEGPQASGDPRSAAPFIRATFGNM). His-260 serves as a coordination point for heme b.

The protein belongs to the peroxidase family. Peroxidase/catalase subfamily. As to quaternary structure, homodimer or homotetramer. Heme b is required as a cofactor. Formation of the three residue Trp-Tyr-Met cross-link is important for the catalase, but not the peroxidase activity of the enzyme.

It catalyses the reaction H2O2 + AH2 = A + 2 H2O. The catalysed reaction is 2 H2O2 = O2 + 2 H2O. Bifunctional enzyme with both catalase and broad-spectrum peroxidase activity. The chain is Catalase-peroxidase from Acinetobacter baumannii (strain ATCC 17978 / DSM 105126 / CIP 53.77 / LMG 1025 / NCDC KC755 / 5377).